We begin with the raw amino-acid sequence, 88 residues long: Sec-independent protein translocase protein TatA (88 aa).

A helical transmembrane segment spans residues 1–21 (MGGISIWQLLIIALIVVLLFG). A disordered region spans residues 43 to 88 (MSSEEDKKALEDAEAAKPVQTAQTVQSAQPTQQATEKKPESNKEQA). Residues 46–57 (EEDKKALEDAEA) show a composition bias toward basic and acidic residues. The segment covering 62–76 (QTAQTVQSAQPTQQA) has biased composition (polar residues). Over residues 77 to 88 (TEKKPESNKEQA) the composition is skewed to basic and acidic residues.

Belongs to the TatA/E family. As to quaternary structure, the Tat system comprises two distinct complexes: a TatABC complex, containing multiple copies of TatA, TatB and TatC subunits, and a separate TatA complex, containing only TatA subunits. Substrates initially bind to the TatABC complex, which probably triggers association of the separate TatA complex to form the active translocon.

The protein resides in the cell inner membrane. Part of the twin-arginine translocation (Tat) system that transports large folded proteins containing a characteristic twin-arginine motif in their signal peptide across membranes. TatA could form the protein-conducting channel of the Tat system. This Shewanella oneidensis (strain ATCC 700550 / JCM 31522 / CIP 106686 / LMG 19005 / NCIMB 14063 / MR-1) protein is Sec-independent protein translocase protein TatA.